The primary structure comprises 303 residues: Probable cell division protein WhiA (303 aa).

Positions 272–303 (SIQQIADSLETPLSKSGVNHRLRKINKIADEL) form a DNA-binding region, H-T-H motif.

It belongs to the WhiA family.

Its function is as follows. Involved in cell division and chromosome segregation. The polypeptide is Probable cell division protein WhiA (Streptococcus agalactiae serotype Ia (strain ATCC 27591 / A909 / CDC SS700)).